Consider the following 384-residue polypeptide: Glucose-fructose oxidoreductase domain-containing protein 2 (384 aa).

A signal peptide spans 1–25 (MMTLPGIGVFGTGNTARVLIQLLRA). The interval 358-384 (GEWESVELTNEETDSNQNLSEVIQHNL) is disordered. Residues 372 to 384 (SNQNLSEVIQHNL) show a composition bias toward polar residues.

The protein belongs to the Gfo/Idh/MocA family.

The protein localises to the secreted. Its subcellular location is the extracellular space. It is found in the extracellular matrix. Functionally, promotes matrix assembly. The sequence is that of Glucose-fructose oxidoreductase domain-containing protein 2 (gfod2) from Xenopus laevis (African clawed frog).